The following is an 883-amino-acid chain: Glutamate receptor 2 (883 aa).

An N-terminal signal peptide occupies residues 1–24; it reads MQKIMHISVLLSPVLWGLIFGVSS. Topologically, residues 25-543 are extracellular; the sequence is NSIQIGGLFP…GVFSFLDPLA (519 aa). A disulfide bridge connects residues Cys78 and Cys330. Residues Asn256, Asn370, Asn406, and Asn413 are each glycosylated (N-linked (GlcNAc...) asparagine). Positions 499, 501, and 506 each coordinate L-glutamate. The helical transmembrane segment at 544-564 threads the bilayer; it reads YEIWMCIVFAYIGVSVVLFLV. The Cytoplasmic segment spans residues 565 to 591; that stretch reads SRFSPYEWHTEEFEDGRETQSSESTNE. The helical; Pore-forming intramembrane region spans 592–607; it reads FGIFNSLWFSLGAFMQ. An intramembrane segment occupies 608–610; sequence QGC. Cys610 carries the S-palmitoyl cysteine lipid modification. The Cytoplasmic portion of the chain corresponds to 611 to 616; the sequence is DISPRS. The helical transmembrane segment at 617 to 637 threads the bilayer; the sequence is LSGRIVGGVWWFFTLIIISSY. Residues 638–812 are Extracellular-facing; it reads TANLAAFLTV…EKTSALSLSN (175 aa). Residues Ser675 and Thr676 each coordinate L-glutamate. Ser683 carries the phosphoserine; by PKC modification. Ser717 carries the phosphoserine; by PKG modification. Residue Glu726 coordinates L-glutamate. Cys739 and Cys794 are disulfide-bonded. Residues 813 to 833 form a helical membrane-spanning segment; sequence VAGVFYILVGGLGLAMLVALI. At 834–883 the chain is on the cytoplasmic side; it reads EFCYKSRAEAKRMKVAKNAQNINPSSSQNSQNFATYKEGYNVYGIESVKI. Cys836 carries S-palmitoyl cysteine lipidation. Phosphoserine occurs at positions 860 and 863. Residues 867–877 are required for interaction with IQSEC1; sequence ATYKEGYNVYG. Tyr876 is subject to Phosphotyrosine. Ser880 carries the phosphoserine modification.

The protein belongs to the glutamate-gated ion channel (TC 1.A.10.1) family. GRIA2 subfamily. As to quaternary structure, homotetramer or heterotetramer of pore-forming glutamate receptor subunits. Tetramers may be formed by the dimerization of dimers. May interact with MPP4. Forms a ternary complex with GRIP1 and CSPG4. Interacts with ATAD1 in an ATP-dependent manner. ATAD1-catalyzed ATP hydrolysis disrupts binding to ATAD1 and to GRIP1 and leads to AMPAR complex disassembly. Interacts with GRIP1 and GRIP2. Interacts with NSF via its C-terminus. Isoform 1, but not isoform 3, interacts with PICK1. Interacts with CACNG2. Interacts with GRIA1 and SYNDIG1. Part of a complex containing GRIA2, NSF and NAPA and/or NAPB. Interacts with SNX27 (via PDZ domain); the interaction is required for recycling to the plasma membrane when endocytosed and prevent degradation in lysosomes. Interacts with LRFN1. Found in a complex with GRIA1, GRIA3, GRIA4, CNIH2, CNIH3, CACNG2, CACNG3, CACNG4, CACNG5, CACNG7 and CACNG8. Interacts with CACNG5. Interacts with OLFM2. Interacts with AP4B1, AP4E1 and AP4M1; probably indirect it mediates the somatodendritic localization of GRIA2 in neurons. Forms a complex with GRIP1, NSG1 and STX12; controls the intracellular fate of AMPAR and the endosomal sorting of the GRIA2 subunit toward recycling and membrane targeting. Interacts with IQSEC1; the interaction is required for ARF6 activation. Interacts (heterotetramer form) with CNIH2 and CNIH3; this interaction promotes expression at the plasma membrane and extensively modulates their gating properties by slowing deactivation and desensitization kinetics. Post-translationally, palmitoylated. Depalmitoylated upon L-glutamate stimulation. Cys-610 palmitoylation leads to Golgi retention and decreased cell surface expression. In contrast, Cys-836 palmitoylation does not affect cell surface expression but regulates stimulation-dependent endocytosis. Ubiquitinated by RNF167, leading to its degradation. In terms of processing, phosphorylation at Tyr-876 is required for interaction with IQSEC1 and ARF6 activation, which in turn triggers AMPAR internalization for persistent synaptic depression. Post-translationally, N-glycosylated.

It localises to the cell membrane. The protein resides in the postsynaptic cell membrane. Its subcellular location is the postsynaptic density membrane. It carries out the reaction Ca(2+)(in) = Ca(2+)(out). It catalyses the reaction Na(+)(in) = Na(+)(out). Ionotropic glutamate receptor that functions as a ligand-gated cation channel, gated by L-glutamate and glutamatergic agonists such as alpha-amino-3-hydroxy-5-methyl-4-isoxazolepropionic acid (AMPA), quisqualic acid, and kainic acid. L-glutamate acts as an excitatory neurotransmitter at many synapses in the central nervous system and plays an important role in fast excitatory synaptic transmission. Binding of the excitatory neurotransmitter L-glutamate induces a conformation change, leading to the opening of the cation channel, and thereby converts the chemical signal to an electrical impulse upon entry of monovalent and divalent cations such as sodium and calcium. The receptor then desensitizes rapidly and enters in a transient inactive state, characterized by the presence of bound agonist. In the presence of CACNG4 or CACNG7 or CACNG8, shows resensitization which is characterized by a delayed accumulation of current flux upon continued application of L-glutamate. Through complex formation with NSG1, GRIP1 and STX12 controls the intracellular fate of AMPAR and the endosomal sorting of the GRIA2 subunit toward recycling and membrane targeting. The polypeptide is Glutamate receptor 2 (Homo sapiens (Human)).